We begin with the raw amino-acid sequence, 320 residues long: Probable cell division protein WhiA (320 aa).

A DNA-binding region (H-T-H motif) is located at residues 282–315 (SLEELGRAARPQISKDAVAGRIRRLLQRAEKAEQ).

Belongs to the WhiA family.

Involved in cell division and chromosome segregation. This Bifidobacterium animalis subsp. lactis (strain AD011) protein is Probable cell division protein WhiA.